The sequence spans 389 residues: Cuticlin-3 (389 aa).

Residues 1–19 form the signal peptide; sequence MARYSLGLGLCLLVASVSA. At 20–354 the chain is on the extracellular side; it reads IPVDNNVEGE…ELCISSFHIS (335 aa). Positions 33–278 constitute a ZP domain; that stretch reads ECGPTSITVN…PTCSEPQGFG (246 aa). N284 carries an N-linked (GlcNAc...) asparagine glycan. The helical transmembrane segment at 355-375 threads the bilayer; that stretch reads VVTVFLGLTVFVAIFITYMIV. At 376–389 the chain is on the cytoplasmic side; it reads SRMMVPSDKMQSAC.

It is found in the cell membrane. Functionally, plays a role in alae formation in L1 larvae. The chain is Cuticlin-3 from Caenorhabditis elegans.